The sequence spans 105 residues: Histone H2A-like 1 (105 aa).

This sequence belongs to the histone H2A family. The nucleosome is a histone octamer containing two molecules each of H2A, H2B, H3 and H4 assembled in one H3-H4 heterotetramer and two H2A-H2B heterodimers. May be incorporated into a proportion of nucleosomes, replacing one or more H2A molecules. Interacts with H2BC1/TH2B; preferentially dimerizes with H2BC1/TH2B to form nucleosomes. As to expression, testis-specific.

It localises to the nucleus. Its subcellular location is the chromosome. Atypical histone H2A which can replace conventional H2A in some nucleosomes and may play a role during spermatogenesis. Nucleosomes wrap and compact DNA into chromatin, limiting DNA accessibility to the cellular machineries which require DNA as a template. Histones thereby play a central role in transcription regulation, DNA repair, DNA replication and chromosomal stability. DNA accessibility is regulated via a complex set of post-translational modifications of histones, also called histone code, and nucleosome remodeling. In Mus musculus (Mouse), this protein is Histone H2A-like 1.